Consider the following 287-residue polypeptide: RxLR effector protein Avr4 (287 aa).

The N-terminal stretch at 1 to 24 (MRSLHILLVFTASLLASLTESAKA) is a signal peptide. Positions 42–55 (RFLRAQTDEKNEER) match the RxLR-dEER motif. The segment at 115–138 (KYERMQWQKLKEGETLTFMRLGDR) is W1 motif. The W2 motif stretch occupies residues 148–171 (QLLRWVAQKKPVESVYDDLQVAGF). The segment at 221-244 (LFEKWAMEGTHIKSVITTLKLNGK) is W3 motif. A y motif region spans residues 246–267 (ASEMANNENFPALLKYVKLYLD).

This sequence belongs to the RxLR effector family.

The protein localises to the secreted. Its subcellular location is the host cytoplasm. It localises to the host nucleus. The protein resides in the host nucleolus. It is found in the host cytoskeleton. Its function is as follows. Secreted effector that acts as an elicitor of hypersensitive response (HR) specifically on plants carrying defense protein R4, through its interaction with this protein. The polypeptide is RxLR effector protein Avr4 (Phytophthora infestans (strain T30-4) (Potato late blight agent)).